Here is a 479-residue protein sequence, read N- to C-terminus: Sulfate adenylyltransferase subunit 1 (479 aa).

The region spanning 25-239 (KSLLRFLTCG…EVLETVDIQR (215 aa)) is the tr-type G domain. The interval 34 to 41 (GSVDDGKS) is G1. Residue 34-41 (GSVDDGKS) coordinates GTP. Residues 92–96 (GITID) form a G2 region. The G3 stretch occupies residues 113–116 (DTPG). Residues 113–117 (DTPGH) and 168–171 (NKMD) contribute to the GTP site. The G4 stretch occupies residues 168-171 (NKMD). Residues 206–208 (SAL) form a G5 region.

This sequence belongs to the TRAFAC class translation factor GTPase superfamily. Classic translation factor GTPase family. CysN/NodQ subfamily. Heterodimer composed of CysD, the smaller subunit, and CysN.

It catalyses the reaction sulfate + ATP + H(+) = adenosine 5'-phosphosulfate + diphosphate. Its pathway is sulfur metabolism; hydrogen sulfide biosynthesis; sulfite from sulfate: step 1/3. With CysD forms the ATP sulfurylase (ATPS) that catalyzes the adenylation of sulfate producing adenosine 5'-phosphosulfate (APS) and diphosphate, the first enzymatic step in sulfur assimilation pathway. APS synthesis involves the formation of a high-energy phosphoric-sulfuric acid anhydride bond driven by GTP hydrolysis by CysN coupled to ATP hydrolysis by CysD. The chain is Sulfate adenylyltransferase subunit 1 from Salmonella paratyphi B (strain ATCC BAA-1250 / SPB7).